A 64-amino-acid chain; its full sequence is Large ribosomal subunit protein bL33 (64 aa).

This sequence belongs to the bacterial ribosomal protein bL33 family.

In Synechococcus sp. (strain JA-2-3B'a(2-13)) (Cyanobacteria bacterium Yellowstone B-Prime), this protein is Large ribosomal subunit protein bL33.